Reading from the N-terminus, the 438-residue chain is V-type ATP synthase beta chain (438 aa).

Belongs to the ATPase alpha/beta chains family.

Its function is as follows. Produces ATP from ADP in the presence of a proton gradient across the membrane. The V-type beta chain is a regulatory subunit. This chain is V-type ATP synthase beta chain (atpB), found in Chlamydia trachomatis serovar D (strain ATCC VR-885 / DSM 19411 / UW-3/Cx).